Consider the following 332-residue polypeptide: Ketol-acid reductoisomerase (NAD(+)) (332 aa).

Residues 1 to 181 (MKIYYDQDAD…GATRAGVIQT (181 aa)) form the KARI N-terminal Rossmann domain. NAD(+) contacts are provided by residues 24–27 (YGSQ), S50, and 82–85 (DEKQ). The active site involves H107. Position 133 (G133) interacts with NAD(+). Residues 182-327 (TFKEETETDL…ARLRGMMPWL (146 aa)) form the KARI C-terminal knotted domain. Mg(2+) contacts are provided by D190, E194, E226, and E230. S251 provides a ligand contact to substrate.

Belongs to the ketol-acid reductoisomerase family. The cofactor is Mg(2+).

The catalysed reaction is (2R)-2,3-dihydroxy-3-methylbutanoate + NAD(+) = (2S)-2-acetolactate + NADH + H(+). It functions in the pathway amino-acid biosynthesis; L-isoleucine biosynthesis; L-isoleucine from 2-oxobutanoate: step 2/4. The protein operates within amino-acid biosynthesis; L-valine biosynthesis; L-valine from pyruvate: step 2/4. In terms of biological role, involved in the biosynthesis of branched-chain amino acids (BCAA). Catalyzes an alkyl-migration followed by a ketol-acid reduction of (S)-2-acetolactate (S2AL) to yield (R)-2,3-dihydroxy-isovalerate. In the isomerase reaction, S2AL is rearranged via a Mg-dependent methyl migration to produce 3-hydroxy-3-methyl-2-ketobutyrate (HMKB). In the reductase reaction, this 2-ketoacid undergoes a metal-dependent reduction by NADH to yield (R)-2,3-dihydroxy-isovalerate. The polypeptide is Ketol-acid reductoisomerase (NAD(+)) (Thermacetogenium phaeum (strain ATCC BAA-254 / DSM 26808 / PB)).